An 82-amino-acid polypeptide reads, in one-letter code: Consomatin Ar1 (82 aa).

The signal sequence occupies residues 1 to 22 (MQTAYWVVVMMMMVWVTAPVSE). A propeptide spanning residues 23 to 60 (GGKLSDVIWGLVPDDLTPQIILQILNASRHAYRRVRPR) is cleaved from the precursor. Cys-64 and Cys-69 are disulfide-bonded. Position 66 is a D-tryptophan (Trp-66). A 4-hydroxyproline mark is found at Pro-70, Pro-71, and Pro-73. The propeptide occupies 74 to 82 (QWIHPLVKR).

Belongs to the conotoxin C superfamily. Consomatin family. As to expression, expressed by the venom duct.

The protein resides in the secreted. In terms of biological role, moderately activates human somatostatin receptors (SSTR) with a preferential activation of SSTR1 and SSTR4. In vivo, does not cause behavioral changes in mice within a few minutes of intracranial injection, but causes a progressive loss of movement thereafter. Four to five hours after injection, mice recover, even with the highest dose tested. Shows antinociception and antihyperalgesia activities in two mouse models of acute pain, most probably by acting outside the central nervous system. The polypeptide is Consomatin Ar1 (Conus arenatus (Sand-dusted cone)).